The following is a 225-amino-acid chain: Protein-L-isoaspartate O-methyltransferase (225 aa).

The active site involves serine 63.

This sequence belongs to the methyltransferase superfamily. L-isoaspartyl/D-aspartyl protein methyltransferase family.

The protein resides in the cytoplasm. The catalysed reaction is [protein]-L-isoaspartate + S-adenosyl-L-methionine = [protein]-L-isoaspartate alpha-methyl ester + S-adenosyl-L-homocysteine. Its function is as follows. Catalyzes the methyl esterification of L-isoaspartyl residues in peptides and proteins that result from spontaneous decomposition of normal L-aspartyl and L-asparaginyl residues. It plays a role in the repair and/or degradation of damaged proteins. In Staphylothermus marinus (strain ATCC 43588 / DSM 3639 / JCM 9404 / F1), this protein is Protein-L-isoaspartate O-methyltransferase.